Here is an 84-residue protein sequence, read N- to C-terminus: U8-theraphotoxin-Hhn1b (84 aa).

Residues 1–21 (MKVVLIVCLVWVMAMMELVSC) form the signal peptide. Cystine bridges form between Cys-23-Cys-35, Cys-29-Cys-44, Cys-34-Cys-67, and Cys-54-Cys-75.

This sequence belongs to the AVIT (prokineticin) family. Expressed by the venom gland.

It localises to the secreted. This chain is U8-theraphotoxin-Hhn1b, found in Cyriopagopus hainanus (Chinese bird spider).